Here is a 183-residue protein sequence, read N- to C-terminus: TATA-box-binding protein (183 aa).

A run of 2 repeats spans residues 7 to 83 and 99 to 177.

Belongs to the TBP family.

In terms of biological role, general factor that plays a role in the activation of archaeal genes transcribed by RNA polymerase. Binds specifically to the TATA box promoter element which lies close to the position of transcription initiation. This is TATA-box-binding protein from Methanothrix thermoacetophila (strain DSM 6194 / JCM 14653 / NBRC 101360 / PT) (Methanosaeta thermophila).